The following is a 413-amino-acid chain: Serine hydroxymethyltransferase (413 aa).

(6S)-5,6,7,8-tetrahydrofolate contacts are provided by residues Leu117 and 121-123 (GHL). At Lys226 the chain carries N6-(pyridoxal phosphate)lysine. 349 to 351 (SPF) provides a ligand contact to (6S)-5,6,7,8-tetrahydrofolate.

This sequence belongs to the SHMT family. In terms of assembly, homodimer. Requires pyridoxal 5'-phosphate as cofactor.

The protein resides in the cytoplasm. The enzyme catalyses (6R)-5,10-methylene-5,6,7,8-tetrahydrofolate + glycine + H2O = (6S)-5,6,7,8-tetrahydrofolate + L-serine. Its pathway is one-carbon metabolism; tetrahydrofolate interconversion. It functions in the pathway amino-acid biosynthesis; glycine biosynthesis; glycine from L-serine: step 1/1. Catalyzes the reversible interconversion of serine and glycine with tetrahydrofolate (THF) serving as the one-carbon carrier. This reaction serves as the major source of one-carbon groups required for the biosynthesis of purines, thymidylate, methionine, and other important biomolecules. Also exhibits THF-independent aldolase activity toward beta-hydroxyamino acids, producing glycine and aldehydes, via a retro-aldol mechanism. In Pelobacter propionicus (strain DSM 2379 / NBRC 103807 / OttBd1), this protein is Serine hydroxymethyltransferase.